We begin with the raw amino-acid sequence, 100 residues long: Small ribosomal subunit protein uS14c (100 aa).

It belongs to the universal ribosomal protein uS14 family. Part of the 30S ribosomal subunit.

Its subcellular location is the plastid. The protein resides in the chloroplast. Functionally, binds 16S rRNA, required for the assembly of 30S particles. The polypeptide is Small ribosomal subunit protein uS14c (Pleurastrum terricola (Filamentous green alga)).